The following is a 307-amino-acid chain: Vesicle-trafficking protein SEC22a (307 aa).

S2 bears the N-acetylserine mark. The Cytoplasmic portion of the chain corresponds to 2-187 (SMILSASVIR…ISSAHQRLEP (186 aa)). 2 positions are modified to phosphoserine: S6 and S8. The Longin domain occupies 8–119 (SVIRVRDGLP…YCFIEFDNFI (112 aa)). Residues 188–208 (ATLSGIVGFILSLLCGALNLI) traverse the membrane as a helical segment. Residues 209-226 (RGFHAIESLLQSDGDDFN) lie on the Lumenal side of the membrane. A helical transmembrane segment spans residues 227-247 (YIIAFFLGTAACLYQCYLLVY). Residues 248-253 (YTGWRN) are Cytoplasmic-facing. The helical transmembrane segment at 254–271 (VKSFLTFGLICLCNMYLY) threads the bilayer. At 272–274 (ELR) the chain is on the lumenal side. The helical transmembrane segment at 275-295 (NLWQLFFHVTVGAFVTLQIWL) threads the bilayer. Over 296-307 (RQAQGKAPDYDV) the chain is Cytoplasmic.

The protein belongs to the synaptobrevin family.

Its subcellular location is the endoplasmic reticulum membrane. In terms of biological role, may be involved in vesicle transport between the ER and the Golgi complex. The sequence is that of Vesicle-trafficking protein SEC22a (SEC22A) from Macaca fascicularis (Crab-eating macaque).